The following is a 60-amino-acid chain: Protein CADMIUM TOLERANCE 4 (60 aa).

Residues 26-42 (GFLYACLFMLCCCFCCY) traverse the membrane as a helical segment.

It belongs to the CYSTM1 family. In terms of tissue distribution, mainly expressed in shoots, and, to a lower extent, in roots.

It is found in the cell membrane. It localises to the secreted. Its subcellular location is the cell wall. Functionally, confers resistance to heavy metal ions (e.g. aluminium (Al)) by chelating them at the plasma membrane of root cells, thus stopping their entry and reducing their accumulation. The chain is Protein CADMIUM TOLERANCE 4 from Oryza sativa subsp. japonica (Rice).